Consider the following 349-residue polypeptide: Ion-translocating oxidoreductase complex subunit D (349 aa).

3 helical membrane passes run 20-42, 77-99, and 124-144; these read VMQRVILCLLPGLVVQCAFFGWG, SAMLTAILIGVAIPPLAPWWMIV, and AMAAYVLLLVSFPVQMTTWIA. At Thr185 the chain carries FMN phosphoryl threonine. Helical transmembrane passes span 212–232, 239–259, 265–285, 291–311, and 315–335; these read STGVGWFWVNLAYLAGGLVLL, WHISTGVLLGLFVASSIGFLL, ASPLMHLFSGATMLAAFFIAT, ATSPRGRIIFGALIGVLVYII, and GGYPDAFAFAVLLANLCAPFI.

It belongs to the NqrB/RnfD family. In terms of assembly, the complex is composed of six subunits: RnfA, RnfB, RnfC, RnfD, RnfE and RnfG. Requires FMN as cofactor.

It is found in the cell inner membrane. Functionally, part of a membrane-bound complex that couples electron transfer with translocation of ions across the membrane. The polypeptide is Ion-translocating oxidoreductase complex subunit D (Shewanella baltica (strain OS185)).